We begin with the raw amino-acid sequence, 199 residues long: Cilia- and flagella-associated protein 20 (199 aa).

This sequence belongs to the CFAP20 family. In terms of tissue distribution, expressed in spermatocytes and chordotonal organs in sensory neurons of the antenna.

Its subcellular location is the nucleus. It localises to the nucleolus. It is found in the cell projection. The protein localises to the cilium. The protein resides in the cytoplasm. Its subcellular location is the cytoskeleton. It localises to the microtubule organizing center. It is found in the centrosome. The protein localises to the centriole. The protein resides in the flagellum. Its subcellular location is the cilium axoneme. Functionally, cilium- and flagellum-specific protein that plays a role in axonemal structure organization and motility. Microtubule inner protein (MIP) part of the dynein-decorated doublet microtubules (DMTs) in cilia axoneme, which is required for motile cilia beating. Involved in the regulation of the size and morphology of cilia. Required for sperm individualization, differentiation of the sperm flagellum and tubulin polyglycylation of axonemal microtubules. This is Cilia- and flagella-associated protein 20 from Drosophila melanogaster (Fruit fly).